The primary structure comprises 263 residues: Probable ribosomal RNA small subunit methyltransferase A (263 aa).

S-adenosyl-L-methionine is bound by residues leucine 12, glycine 37, glutamate 58, aspartate 83, and asparagine 100.

It belongs to the class I-like SAM-binding methyltransferase superfamily. rRNA adenine N(6)-methyltransferase family. RsmA subfamily.

The protein localises to the cytoplasm. Its function is as follows. Specifically dimethylates two adjacent adenosines in the loop of a conserved hairpin near the 3'-end of 16S rRNA in the 30S particle. May play a critical role in biogenesis of 30S subunits. This Methanococcus maripaludis (strain C6 / ATCC BAA-1332) protein is Probable ribosomal RNA small subunit methyltransferase A.